The following is a 135-amino-acid chain: uncharacterized protein (135 aa).

Transmembrane regions (helical) follow at residues 20 to 40 and 47 to 67; these read IFSF…NTKL and IAYF…IHGT.

This sequence belongs to the plectrovirus ORF5 family.

Its subcellular location is the host membrane. This is an uncharacterized protein from Spiroplasma virus SpV1-C74 (SpV1).